The following is a 312-amino-acid chain: Methionyl-tRNA formyltransferase (312 aa).

Residue 109-112 (SLLP) coordinates (6S)-5,6,7,8-tetrahydrofolate.

This sequence belongs to the Fmt family.

The catalysed reaction is L-methionyl-tRNA(fMet) + (6R)-10-formyltetrahydrofolate = N-formyl-L-methionyl-tRNA(fMet) + (6S)-5,6,7,8-tetrahydrofolate + H(+). Attaches a formyl group to the free amino group of methionyl-tRNA(fMet). The formyl group appears to play a dual role in the initiator identity of N-formylmethionyl-tRNA by promoting its recognition by IF2 and preventing the misappropriation of this tRNA by the elongation apparatus. The protein is Methionyl-tRNA formyltransferase of Geotalea daltonii (strain DSM 22248 / JCM 15807 / FRC-32) (Geobacter daltonii).